The chain runs to 178 residues: Large ribosomal subunit protein bL19 (178 aa).

The protein belongs to the bacterial ribosomal protein bL19 family.

In terms of biological role, this protein is located at the 30S-50S ribosomal subunit interface and may play a role in the structure and function of the aminoacyl-tRNA binding site. The sequence is that of Large ribosomal subunit protein bL19 from Rhizobium etli (strain ATCC 51251 / DSM 11541 / JCM 21823 / NBRC 15573 / CFN 42).